Consider the following 175-residue polypeptide: Protein-export protein SecB (175 aa).

Belongs to the SecB family. Homotetramer, a dimer of dimers. One homotetramer interacts with 1 SecA dimer.

It localises to the cytoplasm. In terms of biological role, one of the proteins required for the normal export of preproteins out of the cell cytoplasm. It is a molecular chaperone that binds to a subset of precursor proteins, maintaining them in a translocation-competent state. It also specifically binds to its receptor SecA. The polypeptide is Protein-export protein SecB (Anaplasma marginale (strain Florida)).